Here is a 150-residue protein sequence, read N- to C-terminus: Arginine repressor (150 aa).

Belongs to the ArgR family.

Its subcellular location is the cytoplasm. It participates in amino-acid biosynthesis; L-arginine biosynthesis [regulation]. In terms of biological role, regulates arginine biosynthesis genes. This is Arginine repressor from Psychromonas ingrahamii (strain DSM 17664 / CCUG 51855 / 37).